A 428-amino-acid chain; its full sequence is Enolase (428 aa).

Gln-163 contributes to the (2R)-2-phosphoglycerate binding site. Glu-205 (proton donor) is an active-site residue. 3 residues coordinate Mg(2+): Asp-242, Glu-285, and Asp-312. The (2R)-2-phosphoglycerate site is built by Lys-337, Arg-366, Ser-367, and Lys-388. The active-site Proton acceptor is the Lys-337.

The protein belongs to the enolase family. The cofactor is Mg(2+).

Its subcellular location is the cytoplasm. The protein resides in the secreted. It is found in the cell surface. It carries out the reaction (2R)-2-phosphoglycerate = phosphoenolpyruvate + H2O. Its pathway is carbohydrate degradation; glycolysis; pyruvate from D-glyceraldehyde 3-phosphate: step 4/5. Catalyzes the reversible conversion of 2-phosphoglycerate (2-PG) into phosphoenolpyruvate (PEP). It is essential for the degradation of carbohydrates via glycolysis. The sequence is that of Enolase from Neisseria meningitidis serogroup B (strain ATCC BAA-335 / MC58).